The chain runs to 200 residues: Inner membrane-spanning protein YciB (200 aa).

5 helical membrane-spanning segments follow: residues 32–52, 56–76, 93–113, 126–146, and 153–173; these read FVATGAFMVAIVAAVIVSYVV, VPLMALVTAVIVLVFGGLTLV, LFAVTLYVGLMLGRSFIAILF, FLTIRWARFFLFMAVLNEVIW, and FWVAFKAFGVIPLTAVFAMTQ.

Belongs to the YciB family.

The protein localises to the cell inner membrane. Plays a role in cell envelope biogenesis, maintenance of cell envelope integrity and membrane homeostasis. The protein is Inner membrane-spanning protein YciB of Afipia carboxidovorans (strain ATCC 49405 / DSM 1227 / KCTC 32145 / OM5) (Oligotropha carboxidovorans).